A 491-amino-acid chain; its full sequence is NADPH:adrenodoxin oxidoreductase, mitochondrial (491 aa).

Residues 1–32 (MASRCWRWWGWSAWPRTRLPPAGSTPSFCHHF) constitute a mitochondrion transit peptide. Residues A49, E69, L77, and V113 each coordinate FAD. Residues 184-187 (QGNV), 228-229 (RR), and E240 each bind NADP(+). Phosphoserine occurs at positions 310 and 317. FAD contacts are provided by residues W398 and 405-407 (GVI). G405 provides a ligand contact to NADP(+).

This sequence belongs to the ferredoxin--NADP reductase type 1 family. In terms of assembly, monomer. Interacts directly with FDX1. FAD serves as cofactor.

The protein localises to the mitochondrion. Its subcellular location is the mitochondrion inner membrane. The catalysed reaction is 2 reduced [adrenodoxin] + NADP(+) + H(+) = 2 oxidized [adrenodoxin] + NADPH. It carries out the reaction 2 reduced [2Fe-2S]-[ferredoxin] + NADP(+) + H(+) = 2 oxidized [2Fe-2S]-[ferredoxin] + NADPH. It functions in the pathway steroid metabolism; cholesterol metabolism. Its function is as follows. Serves as the first electron transfer protein in all the mitochondrial P450 systems including cholesterol side chain cleavage in all steroidogenic tissues, steroid 11-beta hydroxylation in the adrenal cortex, 25-OH-vitamin D3-24 hydroxylation in the kidney, and sterol C-27 hydroxylation in the liver. Also acts as a ferredoxin--NADP(+) reductase essential for coenzyme Q biosynthesis: together with FDX2, transfers the electrons required for the hydroxylation reaction performed by COQ6. The protein is NADPH:adrenodoxin oxidoreductase, mitochondrial of Homo sapiens (Human).